Consider the following 152-residue polypeptide: Protein SprT-like (152 aa).

Positions 7 to 148 constitute a SprT-like domain; it reads QRLVEEVSLQ…GKCKGKLNLI (142 aa). His-67 lines the Zn(2+) pocket. Glu-68 is an active-site residue. A Zn(2+)-binding site is contributed by His-71.

Belongs to the SprT family. Zn(2+) serves as cofactor.

The protein resides in the cytoplasm. The sequence is that of Protein SprT-like from Bacillus anthracis (strain A0248).